We begin with the raw amino-acid sequence, 235 residues long: Large ribosomal subunit protein uL3 (235 aa).

The protein belongs to the universal ribosomal protein uL3 family. Part of the 50S ribosomal subunit. Forms a cluster with proteins L14 and L19.

Functionally, one of the primary rRNA binding proteins, it binds directly near the 3'-end of the 23S rRNA, where it nucleates assembly of the 50S subunit. In Frankia casuarinae (strain DSM 45818 / CECT 9043 / HFP020203 / CcI3), this protein is Large ribosomal subunit protein uL3.